A 394-amino-acid chain; its full sequence is Ceramide glucosyltransferase (394 aa).

The Lumenal segment spans residues 1-10 (MALLDLAQEG). The chain crosses the membrane as a helical span at residues 11-32 (MALFGFVLFVVLWLMHFMSIIY). The Cytoplasmic segment spans residues 33–195 (TRLHLNKKAT…QVYFGTSHPR (163 aa)). Residue Asp92 is a short sequence motif, D1. Lys117 carries the N6-acetyllysine modification. Asp144 is a short sequence motif (D2). The chain crosses the membrane as a helical span at residues 196–215 (SYISANVTGFKCVTGMSCLM). Over 216 to 287 (RKDVLDQAGG…KLRINMLPAT (72 aa)) the chain is Lumenal. A short sequence motif (D3) is located at residue Asp236. The active-site Proton acceptor is the Asp236. Residues 272-276 (RMIRW) carry the (Q/R)XXRW motif. The chain crosses the membrane as a helical span at residues 288-304 (IICEPISECFVASLIIG). Residues 305-309 (WAAHH) are Cytoplasmic-facing. A helical transmembrane segment spans residues 310-328 (VFRWDIMVFFMCHCLAWFI). The Lumenal portion of the chain corresponds to 329-348 (FDYIQLRGVQGGTLCFSKLD). The helical transmembrane segment at 349-369 (YAVAWFIRESMTIYIFLSALW) threads the bilayer. The Cytoplasmic segment spans residues 370–394 (DPTISWRTGRYRLRCGGTAEEILDV).

This sequence belongs to the glycosyltransferase 2 family. As to quaternary structure, interacts with RTN1; regulates the ceramide glucosyltransferase activity of UGCG.

Its subcellular location is the golgi apparatus membrane. The catalysed reaction is an N-acylsphing-4-enine + UDP-alpha-D-glucose = a beta-D-glucosyl-(1&lt;-&gt;1')-N-acylsphing-4-enine + UDP + H(+). The enzyme catalyses UDP-alpha-D-xylose + an N-acylsphing-4-enine = a beta-D-xylosyl-(1&lt;-&gt;1')-N-acylsphing-4-enine + UDP + H(+). It catalyses the reaction N-(9Z-octadecenoyl)-sphing-4-enine + UDP-alpha-D-xylose = beta-D-xylosyl-(1&lt;-&gt;1')-N-(9Z-octadecenoyl)-sphing-4-enine + UDP + H(+). It functions in the pathway lipid metabolism; sphingolipid metabolism. Functionally, participates in the initial step of the glucosylceramide-based glycosphingolipid/GSL synthetic pathway at the cytosolic surface of the Golgi. Catalyzes the transfer of glucose from UDP-glucose to ceramide to produce glucosylceramide/GlcCer (such as beta-D-glucosyl-(1&lt;-&gt;1')-N-acylsphing-4-enine). Glucosylceramide is the core component of glycosphingolipids/GSLs, amphipathic molecules consisting of a ceramide lipid moiety embedded in the outer leaflet of the membrane, linked to one of hundreds of different externally oriented oligosaccharide structures. Glycosphingolipids are essential components of membrane microdomains that mediate membrane trafficking and signal transduction. They are implicated in many fundamental cellular processes, including growth, differentiation, migration, morphogenesis, cell-to-cell and cell-to-matrix interactions. They are required for instance in the proper development and functioning of the nervous system. As an example of their role in signal transduction, they regulate the leptin receptor/LEPR in the leptin-mediated signaling pathway. They also play an important role in the establishment of the skin barrier regulating keratinocyte differentiation and the proper assembly of the cornified envelope. The biosynthesis of GSLs is also required for the proper intestinal endocytic uptake of nutritional lipids. Catalyzes the synthesis of xylosylceramide/XylCer (such as beta-D-xylosyl-(1&lt;-&gt;1')-N-acylsphing-4-enine) using UDP-Xyl as xylose donor. This is Ceramide glucosyltransferase from Mus musculus (Mouse).